Reading from the N-terminus, the 251-residue chain is NADPH-dependent oxidoreductase (251 aa).

It belongs to the flavin oxidoreductase frp family. FMN is required as a cofactor.

In terms of biological role, reduces FMN, organic nitro compounds and disulfide DTNB. Involved in maintenance of the cellular redox state and the disulfide stress response. This chain is NADPH-dependent oxidoreductase (nfrA), found in Staphylococcus epidermidis (strain ATCC 35984 / DSM 28319 / BCRC 17069 / CCUG 31568 / BM 3577 / RP62A).